The chain runs to 277 residues: Ubiquitin-conjugating enzyme suppressor 1 (277 aa).

A disordered region spans residues 254 to 277; it reads RTLACPDETNDNRGSEHYTKRKKI.

Functionally, not known; its elevated expression suppresses the conditional cell cycle defects associated with UBC3/CDC34 mutations. This is Ubiquitin-conjugating enzyme suppressor 1 (UBS1) from Saccharomyces cerevisiae (strain ATCC 204508 / S288c) (Baker's yeast).